A 101-amino-acid polypeptide reads, in one-letter code: Small ribosomal subunit protein uS14 (101 aa).

It belongs to the universal ribosomal protein uS14 family. As to quaternary structure, part of the 30S ribosomal subunit. Contacts proteins S3 and S10.

In terms of biological role, binds 16S rRNA, required for the assembly of 30S particles and may also be responsible for determining the conformation of the 16S rRNA at the A site. The chain is Small ribosomal subunit protein uS14 from Photobacterium profundum (strain SS9).